The primary structure comprises 318 residues: Fibronectin type III domain-containing protein 11 (318 aa).

Residues Val210–Glu307 form the Fibronectin type-III domain.

This is Fibronectin type III domain-containing protein 11 (FNDC11) from Homo sapiens (Human).